Here is a 424-residue protein sequence, read N- to C-terminus: L-glutamine:2-deoxy-scyllo-inosose aminotransferase (424 aa).

Lys202 carries the N6-(pyridoxal phosphate)lysine modification.

The protein belongs to the DegT/DnrJ/EryC1 family. L-glutamine:2-deoxy-scyllo-inosose/scyllo-inosose aminotransferase subfamily. Requires pyridoxal 5'-phosphate as cofactor.

The enzyme catalyses 2-deoxy-L-scyllo-inosose + L-glutamine = 2-deoxy-scyllo-inosamine + 2-oxoglutaramate. It catalyses the reaction 3-amino-2,3-dideoxy-scyllo-inosose + L-glutamine = 2-deoxystreptamine + 2-oxoglutaramate. It functions in the pathway metabolic intermediate biosynthesis; 2-deoxystreptamine biosynthesis; 2-deoxystreptamine from D-glucose 6-phosphate: step 2/4. The protein operates within antibiotic biosynthesis; tobramycin biosynthesis. Catalyzes the PLP-dependent transamination of 2-deoxy-scyllo-inosose (2-DOI) to form 2-deoxy-scyllo-inosamine (2-DOIA) using L-glutamine as the amino donor. Also catalyzes the transamination of 3-amino-2,3-dideoxy-scyllo-inosose (keto-2-DOIA) into 2-deoxystreptamine (2-DOS). The sequence is that of L-glutamine:2-deoxy-scyllo-inosose aminotransferase (tbmB) from Streptoalloteichus tenebrarius (strain ATCC 17920 / DSM 40477 / JCM 4838 / CBS 697.72 / NBRC 16177 / NCIMB 11028 / NRRL B-12390 / A12253. 1 / ISP 5477) (Streptomyces tenebrarius).